The sequence spans 351 residues: uncharacterized protein (351 aa).

An N-terminal signal peptide occupies residues 1–32 (MKNKKRVFIASSLSCVLLLLSAANTEANSANK). Residues 26–74 (EANSANKDSQDQTKKEHVDKAQQKEKRNVNDKDKNTPGPDDIGKNGKVT) form a disordered region. A compositionally biased stretch (basic and acidic residues) spans 33–60 (DSQDQTKKEHVDKAQQKEKRNVNDKDKN).

This sequence belongs to the aerolysin family.

This is an uncharacterized protein from Staphylococcus aureus (strain MRSA252).